The sequence spans 114 residues: Large ribosomal subunit protein bL20 (114 aa).

This sequence belongs to the bacterial ribosomal protein bL20 family.

Functionally, binds directly to 23S ribosomal RNA and is necessary for the in vitro assembly process of the 50S ribosomal subunit. It is not involved in the protein synthesizing functions of that subunit. This Flavobacterium johnsoniae (strain ATCC 17061 / DSM 2064 / JCM 8514 / BCRC 14874 / CCUG 350202 / NBRC 14942 / NCIMB 11054 / UW101) (Cytophaga johnsonae) protein is Large ribosomal subunit protein bL20.